The sequence spans 715 residues: Serine/arginine repetitive matrix protein 5 (715 aa).

Low complexity predominate over residues 1–13 (MSSPKRSSKPSMS). The interval 1–715 (MSSPKRSSKP…RSSSSSSKLA (715 aa)) is disordered. Positions 32–59 (LKSTKSATPNRSLVPTKPATSRNSVMSP) are enriched in polar residues. Residues 60-79 (SSSKSTKSTSTKRAPSNRPS) show a composition bias toward low complexity. A compositionally biased stretch (basic residues) spans 80–90 (SRSRVRSKART). The span at 92–104 (SRVSTDTRTSKAS) shows a compositional bias: polar residues. The segment covering 112–136 (HQRRGTHSRGRTPGRRGSRSSKRSP) has biased composition (basic residues). 2 stretches are compositionally biased toward polar residues: residues 213–224 (TPSTAKCQTPTG) and 257–272 (YSPT…YNQA). Low complexity predominate over residues 273-285 (STRSRPQSHSQSR). Over residues 286 to 320 (SPRRSRSGSQKRTHSRVRSHSWKRNHSRARSRTRK) the composition is skewed to basic residues. Composition is skewed to basic and acidic residues over residues 359–388 (PSKE…KESG) and 397–521 (KQRD…ERDH). Residues 522-536 (RRSRSPSKERQRRQS) are compositionally biased toward basic residues. Composition is skewed to basic and acidic residues over residues 539-595 (PNKE…DHSR) and 611-628 (SSKE…KEGN). The span at 657 to 666 (TRTSSLSQNR) shows a compositional bias: polar residues. The span at 667–681 (TPSKTSSHSPSTFPS) shows a compositional bias: low complexity. The segment covering 682–715 (GGQTLSQDDSQADATTSKATLPGERSSSSSSKLA) has biased composition (polar residues).

This Homo sapiens (Human) protein is Serine/arginine repetitive matrix protein 5 (SRRM5).